The following is a 562-amino-acid chain: Potassium voltage-gated channel subfamily V member 2 (562 aa).

A compositionally biased stretch (basic and acidic residues) spans 1 to 10 (MLKQSNERRW). Residues 1–34 (MLKQSNERRWSLSYKPWSTPETEDVPNTGSNQHR) form a disordered region. Residues 1–163 (MLKQSNERRW…TDEYFFDRDP (163 aa)) lie on the Cytoplasmic side of the membrane. Residues 164–184 (AVFQLIYNFYTSGVLLVRDEL) traverse the membrane as a helical segment. The Extracellular portion of the chain corresponds to 185–269 (CPRSFLEELG…KPFSSVAAKA (85 aa)). The chain crosses the membrane as a helical span at residues 270-290 (MGVATNLFVLISVVALALNTV). Over 291–344 (EEMQHQAEQGTGGGDPRPILEHVEMLCVAFFTLEFLLRLASTPNLQRFARSALN) the chain is Cytoplasmic. A helical membrane pass occupies residues 345–365 (LVDLVAILPFYLQLLLECFTS). The Extracellular segment spans residues 366–391 (EDQRHNKDSPREHDLETVGRVGKVGQ). Residues 392–412 (VLRIMRLMRIFRILKLARHST) traverse the membrane as a helical; Voltage-sensor segment. Residues 413–427 (GLRAFGFTLRQCYQQ) lie on the Cytoplasmic side of the membrane. A helical membrane pass occupies residues 428 to 448 (VGCLMLFITMGIFSFSAAVYS). At 449-461 (VEHDVPGTNFTSI) the chain is on the extracellular side. N-linked (GlcNAc...) asparagine glycosylation is present at asparagine 457. An intramembrane region (pore-forming) is located at residues 462-482 (LHAWWWAAVSISTVGYGDMYP). A Selectivity filter motif is present at residues 474-479 (TVGYGD). The Extracellular segment spans residues 483 to 488 (ETHLGR). A helical membrane pass occupies residues 489–509 (LFAFLCIAFGIILNGMPISIL). Over 510–562 (YNKFSDYYSKLKAYEYTAIRRERGKVNFMQRATKKMAECLSESHAQSTTRQEN) the chain is Cytoplasmic.

It belongs to the potassium channel family. V (TC 1.A.1.2) subfamily. Kv8.2/KCNV2 sub-subfamily. Heteromultimer with KCNB1, KCNC1 and KCNF1. Does not form homomultimers.

Its subcellular location is the cell membrane. Functionally, potassium channel subunit. Modulates channel activity by shifting the threshold and the half-maximal activation to more negative values. The polypeptide is Potassium voltage-gated channel subfamily V member 2 (Kcnv2) (Mus musculus (Mouse)).